Reading from the N-terminus, the 308-residue chain is Glucan 1,3-beta-glucosidase (308 aa).

The signal sequence occupies residues 1–18 (MQIKFLTTLATVLTSVAA). Glutamate 119 serves as the catalytic Proton donor. Asparagine 197 carries an N-linked (GlcNAc...) asparagine glycan. Residue glutamate 228 is the Nucleophile of the active site.

This sequence belongs to the glycosyl hydrolase 17 family.

It localises to the secreted. It is found in the cell wall. The enzyme catalyses Successive hydrolysis of beta-D-glucose units from the non-reducing ends of (1-&gt;3)-beta-D-glucans, releasing alpha-glucose.. The polypeptide is Glucan 1,3-beta-glucosidase (BGL2) (Candida albicans (Yeast)).